Consider the following 106-residue polypeptide: PAT complex subunit Asterix (106 aa).

Positions 1–29 (MSANNMSDPRRPNKVLRYKPPPSECNPAL) are disordered. Residue serine 2 is modified to N-acetylserine. Topologically, residues 2–32 (SANNMSDPRRPNKVLRYKPPPSECNPALDDP) are cytoplasmic. A helical membrane pass occupies residues 33 to 51 (TPDYMNLLGMIFSMCGLML). Lysine 52 is a topological domain (lumenal). The helical transmembrane segment at 53–70 (LKWCAWVAVYCSFISFAN) threads the bilayer. Over 71–74 (SRSS) the chain is Cytoplasmic. The helical transmembrane segment at 75-95 (EDTKQMMSSFMLSISAVVMSY) threads the bilayer. The Lumenal segment spans residues 96–106 (LQNPQPMTPPW).

This sequence belongs to the Asterix family. As to quaternary structure, component of the PAT complex, composed of WDR83OS/Asterix and CCDC47. The PAT complex is part of the multi-pass translocon (MPT) complex, composed of three subcomplexes, the GEL complex (composed of RAB5IF/OPTI and TMCO1), the BOS complex (composed of NCLN/Nicalin, NOMO1 and TMEM147) and the PAT complex (composed of WDR83OS/Asterix and CCDC47). The MPT complex associates with the SEC61 complex.

The protein localises to the endoplasmic reticulum membrane. In terms of biological role, component of the multi-pass translocon (MPT) complex that mediates insertion of multi-pass membrane proteins into the lipid bilayer of membranes. The MPT complex takes over after the SEC61 complex: following membrane insertion of the first few transmembrane segments of proteins by the SEC61 complex, the MPT complex occludes the lateral gate of the SEC61 complex to promote insertion of subsequent transmembrane regions. Within the MPT complex, the PAT subcomplex sequesters any highly polar regions in the transmembrane domains away from the non-polar membrane environment until they can be buried in the interior of the fully assembled protein. Within the PAT subcomplex, WDR83OS/Asterix binds to and redirects the substrate to a location behind the SEC61 complex. This Bos taurus (Bovine) protein is PAT complex subunit Asterix (WDR83OS).